We begin with the raw amino-acid sequence, 298 residues long: Bifunctional protein FolD (298 aa).

NADP(+) is bound by residues 167–169 (GRS), Ser192, and Ile233.

It belongs to the tetrahydrofolate dehydrogenase/cyclohydrolase family. As to quaternary structure, homodimer.

The catalysed reaction is (6R)-5,10-methylene-5,6,7,8-tetrahydrofolate + NADP(+) = (6R)-5,10-methenyltetrahydrofolate + NADPH. The enzyme catalyses (6R)-5,10-methenyltetrahydrofolate + H2O = (6R)-10-formyltetrahydrofolate + H(+). Its pathway is one-carbon metabolism; tetrahydrofolate interconversion. Its function is as follows. Catalyzes the oxidation of 5,10-methylenetetrahydrofolate to 5,10-methenyltetrahydrofolate and then the hydrolysis of 5,10-methenyltetrahydrofolate to 10-formyltetrahydrofolate. In Caulobacter sp. (strain K31), this protein is Bifunctional protein FolD.